Here is a 454-residue protein sequence, read N- to C-terminus: tRNA modification GTPase MnmE (454 aa).

Residues arginine 23, glutamate 80, and lysine 120 each coordinate (6S)-5-formyl-5,6,7,8-tetrahydrofolate. In terms of domain architecture, TrmE-type G spans 216–377; the sequence is GMKVVIAGRP…LRNHLKQSMG (162 aa). Asparagine 226 lines the K(+) pocket. GTP is bound by residues 226–231, 245–251, 270–273, 335–338, and 358–360; these read NAGKSS, TDIAGTT, DTAG, NKAD, and SAR. Residue serine 230 participates in Mg(2+) binding. K(+) is bound by residues threonine 245, isoleucine 247, and threonine 250. A Mg(2+)-binding site is contributed by threonine 251. Lysine 454 contacts (6S)-5-formyl-5,6,7,8-tetrahydrofolate.

It belongs to the TRAFAC class TrmE-Era-EngA-EngB-Septin-like GTPase superfamily. TrmE GTPase family. In terms of assembly, homodimer. Heterotetramer of two MnmE and two MnmG subunits. The cofactor is K(+).

It localises to the cytoplasm. Its function is as follows. Exhibits a very high intrinsic GTPase hydrolysis rate. Involved in the addition of a carboxymethylaminomethyl (cmnm) group at the wobble position (U34) of certain tRNAs, forming tRNA-cmnm(5)s(2)U34. The protein is tRNA modification GTPase MnmE of Shigella boydii serotype 18 (strain CDC 3083-94 / BS512).